Reading from the N-terminus, the 141-residue chain is MATLQVDVVSAEEAIFAGEAKFVTLPGEAGELGILPGHTPLISRIRPGTVKIVRADGGEENIFVAGGILEVQPGMVTVLADTAIRAADLDEARAVAAREKAEEALRNAKDKADIAVVEAELAMLAAQAVAARKLRQTRNTH.

The protein belongs to the ATPase epsilon chain family. As to quaternary structure, F-type ATPases have 2 components, CF(1) - the catalytic core - and CF(0) - the membrane proton channel. CF(1) has five subunits: alpha(3), beta(3), gamma(1), delta(1), epsilon(1). CF(0) has three main subunits: a, b and c.

The protein localises to the cell inner membrane. In terms of biological role, produces ATP from ADP in the presence of a proton gradient across the membrane. This Bordetella petrii (strain ATCC BAA-461 / DSM 12804 / CCUG 43448) protein is ATP synthase epsilon chain.